The primary structure comprises 429 residues: MNFSESERLQQLSNEYILGGVNSPSRSYKAVGGGAPVVMKEGRGAYLYDVDGNKFIDYLQAYGPIITGHAHPHITKAIQEQAAKGVLFGTPTELEIEFSKKLRDAIPSLEKIRFVNSGTEAVMTTIRVARAYTKRNKIIKFAGSYHGHSDLVLVAAGSGPSQLGSPDSAGVPESVAREVITVPFNDINAYKEAIEFWGDEIAAVLVEPIVGNFGMVMPQPGFLEEVNEISHNNGTLVIYDEVITAFRFHYGAAQDLLGVIPDLTAFGKIVGGGLPIGGYGGRQDIMEQVAPLGPAYQAGTMAGNPLSMKAGIALLEVLEQDGVYEKLDSLGQQLEEGLLKLIEKHNITATINRIYGSLTLYFTDEKVTHYDQVEHSDGEAFGKFFKLMLNQGINLAPSKFEAWFLTTEHTEEDIKQTLKAADYAFSQMK.

K268 is subject to N6-(pyridoxal phosphate)lysine.

It belongs to the class-III pyridoxal-phosphate-dependent aminotransferase family. HemL subfamily. In terms of assembly, homodimer. The cofactor is pyridoxal 5'-phosphate.

It localises to the cytoplasm. The enzyme catalyses (S)-4-amino-5-oxopentanoate = 5-aminolevulinate. It participates in porphyrin-containing compound metabolism; protoporphyrin-IX biosynthesis; 5-aminolevulinate from L-glutamyl-tRNA(Glu): step 2/2. This chain is Glutamate-1-semialdehyde 2,1-aminomutase 2, found in Staphylococcus aureus (strain bovine RF122 / ET3-1).